The following is a 166-amino-acid chain: Sec-independent protein translocase protein TatB (166 aa).

The chain crosses the membrane as a helical span at residues Met1–Gly21. The disordered stretch occupies residues Asp85–Gly146.

It belongs to the TatB family. In terms of assembly, the Tat system comprises two distinct complexes: a TatABC complex, containing multiple copies of TatA, TatB and TatC subunits, and a separate TatA complex, containing only TatA subunits. Substrates initially bind to the TatABC complex, which probably triggers association of the separate TatA complex to form the active translocon.

Its subcellular location is the cell inner membrane. Part of the twin-arginine translocation (Tat) system that transports large folded proteins containing a characteristic twin-arginine motif in their signal peptide across membranes. Together with TatC, TatB is part of a receptor directly interacting with Tat signal peptides. TatB may form an oligomeric binding site that transiently accommodates folded Tat precursor proteins before their translocation. This chain is Sec-independent protein translocase protein TatB, found in Herminiimonas arsenicoxydans.